Reading from the N-terminus, the 1082-residue chain is Error-prone DNA polymerase (1082 aa).

The protein belongs to the DNA polymerase type-C family. DnaE2 subfamily.

It localises to the cytoplasm. The enzyme catalyses DNA(n) + a 2'-deoxyribonucleoside 5'-triphosphate = DNA(n+1) + diphosphate. Functionally, DNA polymerase involved in damage-induced mutagenesis and translesion synthesis (TLS). It is not the major replicative DNA polymerase. The polypeptide is Error-prone DNA polymerase (Xanthomonas campestris pv. campestris (strain 8004)).